The primary structure comprises 694 residues: DNA-binding protein RFX2 (694 aa).

The RFX-type winged-helix DNA-binding region spans 174–249; the sequence is HLQWLLDNYE…YHYYGIRLKP (76 aa). Disordered regions lie at residues 267–310 and 658–694; these read QQPI…QHHQ and KDDV…MQEM. Positions 289 to 299 are enriched in polar residues; it reads PANSSQHASPE. The span at 300 to 310 shows a compositional bias: low complexity; the sequence is QSVAAQSQHHQ.

This sequence belongs to the RFX family. As to quaternary structure, homodimer. Heterodimer; heterodimerizes with other rfx proteins. In terms of tissue distribution, preferentially expressed in ciliated tissues, such as neural tube, gastrocoel roof plate, epidermal multiciliated cells, otic vesicles and kidneys.

The protein resides in the nucleus. The protein localises to the cytoplasm. In terms of biological role, transcription factor that acts as a key regulator of ciliogenesis. Specifically regulates expression of genes required for cilium assembly and function. Recognizes and binds the X-box, a regulatory motif with DNA sequence 5'-GTNRCC(0-3N)RGYAAC-3' present on promoters. Required for neural tube closure and neural ciliogenesis. This Xenopus laevis (African clawed frog) protein is DNA-binding protein RFX2 (rfx2).